The sequence spans 114 residues: DNA-directed RNA polymerases II, IV and V subunit 9B (114 aa).

C7, C10, C29, C32, C76, C79, C103, and C108 together coordinate Zn(2+). The segment at 72-113 (KAVRCAKCQHGEAVFFQATARGEEGMTLFFVCCNPNCSHRWR) adopts a TFIIS-type zinc-finger fold.

The protein belongs to the archaeal RpoM/eukaryotic RPA12/RPB9/RPC11 RNA polymerase family. In terms of assembly, component of the RNA polymerase II, IV and V complexes. Interacts with NRPD1.

The protein localises to the nucleus. The protein resides in the nucleolus. DNA-dependent RNA polymerase catalyzes the transcription of DNA into RNA using the four ribonucleoside triphosphates as substrates. Component of RNA polymerase II which synthesizes mRNA precursors and many functional non-coding RNAs. Pol II is the central component of the basal RNA polymerase II transcription machinery. It is composed of mobile elements that move relative to each other. Component of RNA polymerases IV and V which mediate short-interfering RNAs (siRNA) accumulation and subsequent RNA-directed DNA methylation-dependent (RdDM) transcriptional gene silencing (TGS) of endogenous repeated sequences, including transposable elements. Required for RNA silencing. The protein is DNA-directed RNA polymerases II, IV and V subunit 9B (NRPB9B) of Arabidopsis thaliana (Mouse-ear cress).